Here is a 283-residue protein sequence, read N- to C-terminus: Acetyl-coenzyme A carboxylase carboxyl transferase subunit beta (283 aa).

One can recognise a CoA carboxyltransferase N-terminal domain in the interval 23 to 283 (LWIKCPSCSE…DFLMAGKAAA (261 aa)). 4 residues coordinate Zn(2+): cysteine 27, cysteine 30, cysteine 46, and cysteine 49. The C4-type zinc-finger motif lies at 27–49 (CPSCSEMLFTKEYEDNLSVCPHC).

It belongs to the AccD/PCCB family. As to quaternary structure, acetyl-CoA carboxylase is a heterohexamer composed of biotin carboxyl carrier protein (AccB), biotin carboxylase (AccC) and two subunits each of ACCase subunit alpha (AccA) and ACCase subunit beta (AccD). Zn(2+) serves as cofactor.

Its subcellular location is the cytoplasm. The catalysed reaction is N(6)-carboxybiotinyl-L-lysyl-[protein] + acetyl-CoA = N(6)-biotinyl-L-lysyl-[protein] + malonyl-CoA. It functions in the pathway lipid metabolism; malonyl-CoA biosynthesis; malonyl-CoA from acetyl-CoA: step 1/1. Functionally, component of the acetyl coenzyme A carboxylase (ACC) complex. Biotin carboxylase (BC) catalyzes the carboxylation of biotin on its carrier protein (BCCP) and then the CO(2) group is transferred by the transcarboxylase to acetyl-CoA to form malonyl-CoA. In Novosphingobium aromaticivorans (strain ATCC 700278 / DSM 12444 / CCUG 56034 / CIP 105152 / NBRC 16084 / F199), this protein is Acetyl-coenzyme A carboxylase carboxyl transferase subunit beta.